The primary structure comprises 239 residues: Probable transcriptional regulatory protein BC_0539 (239 aa).

Belongs to the TACO1 family. YeeN subfamily.

It is found in the cytoplasm. The polypeptide is Probable transcriptional regulatory protein BC_0539 (Bacillus cereus (strain ATCC 14579 / DSM 31 / CCUG 7414 / JCM 2152 / NBRC 15305 / NCIMB 9373 / NCTC 2599 / NRRL B-3711)).